Here is a 264-residue protein sequence, read N- to C-terminus: Chanoclavine-I dehydrogenase easD (264 aa).

The first 20 residues, 1 to 20 (MASVSSKIFAITGGASGIGA), serve as a signal peptide directing secretion. The NADP(+) site is built by isoleucine 18, aspartate 66, arginine 132, tyrosine 169, lysine 173, and threonine 204. Tyrosine 169 acts as the Proton donor in catalysis. Catalysis depends on lysine 173, which acts as the Lowers pKa of active site Tyr.

The protein belongs to the short-chain dehydrogenases/reductases (SDR) family. As to quaternary structure, homotetramer.

It carries out the reaction chanoclavine-I + NAD(+) = chanoclavine-I aldehyde + NADH + H(+). The protein operates within alkaloid biosynthesis; ergot alkaloid biosynthesis. In terms of biological role, chanoclavine-I dehydrogenase; part of the gene cluster that mediates the biosynthesis of fungal ergot alkaloid. DmaW catalyzes the first step of ergot alkaloid biosynthesis by condensing dimethylallyl diphosphate (DMAP) and tryptophan to form 4-dimethylallyl-L-tryptophan. The second step is catalyzed by the methyltransferase easF that methylates 4-dimethylallyl-L-tryptophan in the presence of S-adenosyl-L-methionine, resulting in the formation of 4-dimethylallyl-L-abrine. The catalase easC and the FAD-dependent oxidoreductase easE then transform 4-dimethylallyl-L-abrine to chanoclavine-I which is further oxidized by easD in the presence of NAD(+), resulting in the formation of chanoclavine-I aldehyde. Chanoclavine-I aldehyde is the precursor of ergoamides and ergopeptines in Clavicipitaceae, and clavine-type alcaloids such as fumiclavine in Trichocomaceae. However, the metabolites downstream of chanoclavine-I aldehyde in Arthrodermataceae have not been identified yet. This is Chanoclavine-I dehydrogenase easD from Arthroderma otae (strain ATCC MYA-4605 / CBS 113480) (Microsporum canis).